The chain runs to 218 residues: Adenylate kinase (218 aa).

ATP is bound at residue G10–T15. An NMP region spans residues S30–V59. AMP-binding positions include T31, R36, E57 to V59, and Q92. Residues G122–D159 are LID. ATP contacts are provided by residues R123 and T132–Y133. Residues R156 and R167 each coordinate AMP. Q202 contacts ATP.

The protein belongs to the adenylate kinase family. In terms of assembly, monomer.

Its subcellular location is the cytoplasm. It catalyses the reaction AMP + ATP = 2 ADP. It participates in purine metabolism; AMP biosynthesis via salvage pathway; AMP from ADP: step 1/1. Its function is as follows. Catalyzes the reversible transfer of the terminal phosphate group between ATP and AMP. Plays an important role in cellular energy homeostasis and in adenine nucleotide metabolism. The sequence is that of Adenylate kinase from Francisella tularensis subsp. tularensis (strain FSC 198).